The chain runs to 90 residues: uncharacterized protein (90 aa).

A helical transmembrane segment spans residues I32–F52.

It is found in the membrane. This is an uncharacterized protein from Schizosaccharomyces pombe (strain 972 / ATCC 24843) (Fission yeast).